Here is a 639-residue protein sequence, read N- to C-terminus: C-type lectin domain-containing protein 160 (639 aa).

Residues Met1–Thr19 form the signal peptide. VWFA domains follow at residues Asp31 to Gly178 and Asp289 to Val474. In terms of domain architecture, C-type lectin spans Lys491–Tyr618. The cysteines at positions 594 and 614 are disulfide-linked.

Its subcellular location is the secreted. The polypeptide is C-type lectin domain-containing protein 160 (clec-160) (Caenorhabditis elegans).